The chain runs to 213 residues: Elongation factor 1-beta (213 aa).

Positions 67-80 (AGKAPAASGSAAAA) are enriched in low complexity. The segment at 67 to 88 (AGKAPAASGSAAAAAEEEDDED) is disordered.

Belongs to the EF-1-beta/EF-1-delta family. In terms of assembly, EF-1 is composed of 4 subunits: alpha, beta, delta, and gamma.

Its function is as follows. EF-1-beta and EF-1-delta stimulate the exchange of GDP bound to EF-1-alpha to GTP. The chain is Elongation factor 1-beta (EFB1) from Candida albicans (strain WO-1) (Yeast).